A 1081-amino-acid polypeptide reads, in one-letter code: Zinc finger protein 827 (1081 aa).

Basic and acidic residues predominate over residues 1-10 (MPRRKQEQPK). Residues 1 to 14 (MPRRKQEQPKRLPS) form a mediates direct interaction with RBBP4 region. The tract at residues 1-77 (MPRRKQEQPK…DTSLGSTTPS (77 aa)) is disordered. The RRK motif; mediates NuRD recruitment to telomeres motif lies at 3-5 (RRK). The segment covering 62-77 (EQSTSPDTSLGSTTPS) has biased composition (polar residues). Glycyl lysine isopeptide (Lys-Gly) (interchain with G-Cter in SUMO2) cross-links involve residues Lys176, Lys216, and Lys226. 2 disordered regions span residues 259–278 (KVSERSLTPGQEHPPPASSF) and 307–348 (SSLL…SLEL). Positions 327–344 (VTPPPPPPPPPPPPPPPQ) are enriched in pro residues. Glycyl lysine isopeptide (Lys-Gly) (interchain with G-Cter in SUMO2) cross-links involve residues Lys360 and Lys372. C2H2-type zinc fingers lie at residues 374–396 (FQCPICGLVIKRKSYWKRHMVIH), 402–424 (HQCPLCPFRCARKDNLKSHMKVH), and 433–455 (FQCQLCPFTSSRHFSLKLHMRCH). Glycyl lysine isopeptide (Lys-Gly) (interchain with G-Cter in SUMO2) cross-links involve residues Lys466, Lys475, Lys523, Lys549, Lys580, Lys587, Lys597, Lys634, Lys639, and Lys658. Lys673 participates in a covalent cross-link: Glycyl lysine isopeptide (Lys-Gly) (interchain with G-Cter in SUMO1); alternate. Residue Lys673 forms a Glycyl lysine isopeptide (Lys-Gly) (interchain with G-Cter in SUMO2); alternate linkage. Glycyl lysine isopeptide (Lys-Gly) (interchain with G-Cter in SUMO2) cross-links involve residues Lys704, Lys710, Lys742, Lys778, and Lys798. 2 consecutive C2H2-type zinc fingers follow at residues 817-839 (FPCDVCGKVFGRQQTLSRHLSLH) and 845-867 (YKCHLCPYAAKCRANLNQHLTVH). Glycyl lysine isopeptide (Lys-Gly) (interchain with G-Cter in SUMO2) cross-links involve residues Lys870 and Lys891. C2H2-type zinc fingers lie at residues 897 to 919 (YSCHVCGFETELNVQFVSHMSLH) and 929 to 952 (ICCTACDFVTMEEAEIKTHIGTKH). A compositionally biased stretch (basic and acidic residues) spans 947-960 (HIGTKHTGEDRKTP). The tract at residues 947–996 (HIGTKHTGEDRKTPSESNSPSSSSLSALSDSANSKDDSDGSQKNKGGNNL) is disordered. A Glycyl lysine isopeptide (Lys-Gly) (interchain with G-Cter in SUMO2) cross-link involves residue Lys958. The span at 961–978 (SESNSPSSSSLSALSDSA) shows a compositional bias: low complexity. Residues 979 to 988 (NSKDDSDGSQ) are compositionally biased toward basic and acidic residues. Lys1014 participates in a covalent cross-link: Glycyl lysine isopeptide (Lys-Gly) (interchain with G-Cter in SUMO2). 2 C2H2-type zinc fingers span residues 1019-1041 (FECVFCNFVCKTKNMFERHLQIH) and 1047-1069 (FECDVCHKFMKTPEQLLEHKKCH).

The protein belongs to the krueppel C2H2-type zinc-finger protein family. Part of a transcription inhibitory ribonucleoprotein complex composed at least of the circular RNA circZNF827, HNRNPK and HNRNPL. Interacts with the nucleosome remodeling and histone deacetylase/NuRD complex. Interacts with RBBP4; the interaction is direct and recruits RBBP4, a component of the NuRD complex, to telomeres.

It localises to the nucleus. The protein localises to the chromosome. The protein resides in the telomere. As part of a ribonucleoprotein complex composed at least of HNRNPK, HNRNPL and the circular RNA circZNF827 that nucleates the complex on chromatin, may negatively regulate the transcription of genes involved in neuronal differentiation. Could also recruit the nucleosome remodeling and histone deacetylase/NuRD complex to telomeric regions of chromosomes to regulate chromatin remodeling as part of telomere maintenance. The protein is Zinc finger protein 827 (ZNF827) of Homo sapiens (Human).